Consider the following 428-residue polypeptide: 3-phosphoshikimate 1-carboxyvinyltransferase (428 aa).

Residues Lys22, Ser23, and Arg27 each contribute to the 3-phosphoshikimate site. Lys22 serves as a coordination point for phosphoenolpyruvate. Residues Gly95 and Arg123 each contribute to the phosphoenolpyruvate site. Residues Ser170, Ser171, Gln172, Ser197, Asp316, and Lys343 each coordinate 3-phosphoshikimate. Phosphoenolpyruvate is bound at residue Gln172. Asp316 acts as the Proton acceptor in catalysis. Phosphoenolpyruvate is bound by residues Arg347, Arg390, and Lys414.

It belongs to the EPSP synthase family. In terms of assembly, monomer.

It localises to the cytoplasm. It carries out the reaction 3-phosphoshikimate + phosphoenolpyruvate = 5-O-(1-carboxyvinyl)-3-phosphoshikimate + phosphate. The protein operates within metabolic intermediate biosynthesis; chorismate biosynthesis; chorismate from D-erythrose 4-phosphate and phosphoenolpyruvate: step 6/7. Functionally, catalyzes the transfer of the enolpyruvyl moiety of phosphoenolpyruvate (PEP) to the 5-hydroxyl of shikimate-3-phosphate (S3P) to produce enolpyruvyl shikimate-3-phosphate and inorganic phosphate. The polypeptide is 3-phosphoshikimate 1-carboxyvinyltransferase (Laribacter hongkongensis (strain HLHK9)).